Here is a 557-residue protein sequence, read N- to C-terminus: CTP synthase (557 aa).

Positions M1–L270 are amidoligase domain. S13 is a binding site for CTP. S13 contacts UTP. ATP-binding positions include S14–I19 and D71. Residues D71 and E144 each contribute to the Mg(2+) site. Residues D151–E153, K191–Q196, and K227 each bind CTP. UTP-binding positions include K191–Q196 and K227. In terms of domain architecture, Glutamine amidotransferase type-1 spans T295–S547. Residue G356 participates in L-glutamine binding. C383 functions as the Nucleophile; for glutamine hydrolysis in the catalytic mechanism. Residues L384–Q387, E407, and R473 contribute to the L-glutamine site. Active-site residues include H520 and E522.

The protein belongs to the CTP synthase family. Homotetramer.

The catalysed reaction is UTP + L-glutamine + ATP + H2O = CTP + L-glutamate + ADP + phosphate + 2 H(+). It carries out the reaction L-glutamine + H2O = L-glutamate + NH4(+). It catalyses the reaction UTP + NH4(+) + ATP = CTP + ADP + phosphate + 2 H(+). It participates in pyrimidine metabolism; CTP biosynthesis via de novo pathway; CTP from UDP: step 2/2. With respect to regulation, allosterically activated by GTP, when glutamine is the substrate; GTP has no effect on the reaction when ammonia is the substrate. The allosteric effector GTP functions by stabilizing the protein conformation that binds the tetrahedral intermediate(s) formed during glutamine hydrolysis. Inhibited by the product CTP, via allosteric rather than competitive inhibition. Its function is as follows. Catalyzes the ATP-dependent amination of UTP to CTP with either L-glutamine or ammonia as the source of nitrogen. Regulates intracellular CTP levels through interactions with the four ribonucleotide triphosphates. The chain is CTP synthase from Paraburkholderia xenovorans (strain LB400).